The chain runs to 874 residues: Alanine--tRNA ligase (874 aa).

The Zn(2+) site is built by H562, H566, C665, and H669.

This sequence belongs to the class-II aminoacyl-tRNA synthetase family. Requires Zn(2+) as cofactor.

The protein localises to the cytoplasm. The enzyme catalyses tRNA(Ala) + L-alanine + ATP = L-alanyl-tRNA(Ala) + AMP + diphosphate. Functionally, catalyzes the attachment of alanine to tRNA(Ala) in a two-step reaction: alanine is first activated by ATP to form Ala-AMP and then transferred to the acceptor end of tRNA(Ala). Also edits incorrectly charged Ser-tRNA(Ala) and Gly-tRNA(Ala) via its editing domain. This is Alanine--tRNA ligase from Pseudomonas putida (strain ATCC 47054 / DSM 6125 / CFBP 8728 / NCIMB 11950 / KT2440).